The chain runs to 295 residues: 4-hydroxy-tetrahydrodipicolinate synthase (295 aa).

Threonine 46 serves as a coordination point for pyruvate. Catalysis depends on tyrosine 134, which acts as the Proton donor/acceptor. The active-site Schiff-base intermediate with substrate is lysine 162. Valine 204 serves as a coordination point for pyruvate.

The protein belongs to the DapA family. Homotetramer; dimer of dimers.

It localises to the cytoplasm. The enzyme catalyses L-aspartate 4-semialdehyde + pyruvate = (2S,4S)-4-hydroxy-2,3,4,5-tetrahydrodipicolinate + H2O + H(+). The protein operates within amino-acid biosynthesis; L-lysine biosynthesis via DAP pathway; (S)-tetrahydrodipicolinate from L-aspartate: step 3/4. In terms of biological role, catalyzes the condensation of (S)-aspartate-beta-semialdehyde [(S)-ASA] and pyruvate to 4-hydroxy-tetrahydrodipicolinate (HTPA). This is 4-hydroxy-tetrahydrodipicolinate synthase from Oceanobacillus iheyensis (strain DSM 14371 / CIP 107618 / JCM 11309 / KCTC 3954 / HTE831).